A 510-amino-acid chain; its full sequence is Major facilitator superfamily domain-containing protein 8 (510 aa).

At 1 to 38 the chain is on the cytoplasmic side; it reads MASIDDDDDERTPLLQDSHIGELVETQKQLKSRWWSIR. The short motif at 14 to 15 is the Dileucine internalization motif element; the sequence is LL. A helical membrane pass occupies residues 39–59; the sequence is VMYLTMFLSSVGFSIVMTSIW. Over 60–72 the chain is Extracellular; it reads PYLQKVDQSADAS. The chain crosses the membrane as a helical span at residues 73-93; sequence FLGWVIASFSLGQMVASPLFG. Over 94–103 the chain is Cytoplasmic; the sequence is LWSNHRPRRE. A helical transmembrane segment spans residues 104–124; it reads PLVVSITILVAASCLYAYVHV. Over 125 to 132 the chain is Extracellular; that stretch reads PASHNKYY. Residues 133-155 traverse the membrane as a helical segment; sequence MLLARTFVGFGSGNVAVVRSYVA. Residues 156 to 171 are Cytoplasmic-facing; it reads GATSLSERTGAMANIS. Residues 172 to 192 form a helical membrane-spanning segment; that stretch reads AFQAMGFILGPAFQAALSVIG. The Extracellular segment spans residues 193–209; it reads ETGITINGISLQVNMYT. Residues 210–230 form a helical membrane-spanning segment; the sequence is APALMGALLGIGNIILIFAIF. The Cytoplasmic segment spans residues 231–264; that stretch reads REHRVDDLEKNVSSINSESEVTDVEKANEGPIDQ. Residues 265–285 traverse the membrane as a helical segment; the sequence is IAVISSNILFFVVLFVFAIFE. Residues 286–302 are Extracellular-facing; sequence TISTPLTMDMYAWTRTQ. The chain crosses the membrane as a helical span at residues 303-323; it reads AVFYNGIILAAVGVESVIVFL. Topologically, residues 324-335 are cytoplasmic; that stretch reads TVKILCKKTGER. A helical membrane pass occupies residues 336–356; it reads VLLLGGLAVIWIGFFILLPWG. The Extracellular portion of the chain corresponds to 357 to 406; sequence NQMPKIQWTDLQNATIHNTTQWTSSIPSSGNHSVEPTGCPVIQTWCLYTP. 2 N-linked (GlcNAc...) asparagine glycosylation sites follow: asparagine 369 and asparagine 374. A helical transmembrane segment spans residues 407–427; that stretch reads VIHLAQYLTSDILIGVGYPIC. At 428–445 the chain is on the cytoplasmic side; that stretch reads NVMSYTLYSKIIGPKPQG. Residues 446–466 form a helical membrane-spanning segment; sequence LYMGWLTAAGSAARTLGPVFV. Residues 467–476 lie on the Extracellular side of the membrane; sequence SQIYTHLGTR. Residues 477–497 traverse the membrane as a helical segment; that stretch reads WTFGIICAFVALSLLHLTAVY. Residues 498–510 are Cytoplasmic-facing; sequence KRLIPFSTRYERL.

The protein belongs to the major facilitator superfamily.

The protein resides in the lysosome membrane. In terms of biological role, may be a carrier that transport small solutes by using chemiosmotic ion gradients. The polypeptide is Major facilitator superfamily domain-containing protein 8 (mfsd8) (Xenopus laevis (African clawed frog)).